We begin with the raw amino-acid sequence, 174 residues long: Early E1A protein (174 aa).

Residues 40–48 (PSLHDLFDL) are interaction with RB1 in competition with E2F1. An LXCXE motif, interaction with host RB1 motif is present at residues 106–110 (LLCLE). Residues 145 to 163 (CLRCAYYQEQGENSICGLC) fold into a zinc finger.

This sequence belongs to the adenoviridae E1A protein family. Interacts with host UBE2I; this interaction interferes with polySUMOylation. Interacts with host RB1; this interaction induces the aberrant dissociation of RB1-E2F1 complex thereby disrupting the activity of RB1 and activating E2F1-regulated genes. Interacts with host ATF7; the interaction enhances ATF7-mediated viral transactivation activity which requires the zinc binding domains of both proteins. Isoform early E1A 32 kDa protein and isoform early E1A 26 kDa protein interact (via N-terminus) with CUL1 and E3 ubiquitin ligase RBX1; these interactions inhibit RBX1-CUL1-dependent elongation reaction of ubiquitin chains and attenuate ubiquitination of SCF(FBXW7) target proteins. Interacts (via PXLXP motif) with host ZMYND11/BS69 (via MYND-type zinc finger); this interaction inhibits E1A mediated transactivation. Interacts with host EP300; this interaction stimulates the acetylation of RB1 by recruiting EP300 and RB1 into a multimeric-protein complex. Interacts with host CTBP1 and CTBP2; this interaction seems to potentiate viral replication. Interacts with host DCAF7. Interacts with host DYRK1A. Interacts with host KPNA4; this interaction allows E1A import into the host nucleus. Interacts with host EP400; this interaction stabilizes MYC. Interacts with host TBP protein; this interaction probably disrupts the TBP-TATA complex.

The protein resides in the host nucleus. Plays a role in viral genome replication by driving entry of quiescent cells into the cell cycle. Stimulation of progression from G1 to S phase allows the virus to efficiently use the cellular DNA replicating machinery to achieve viral genome replication. E1A protein has both transforming and trans-activating activities. Induces the disassembly of the E2F1 transcription factor from RB1 by direct competition for the same binding site on RB1, with subsequent transcriptional activation of E2F1-regulated S-phase genes and of the E2 region of the adenoviral genome. Release of E2F1 leads to the ARF-mediated inhibition of MDM2 and causes TP53/p53 to accumulate because it is not targeted for degradation by MDM2-mediated ubiquitination anymore. This increase in TP53, in turn, would arrest the cell proliferation and direct its death but this effect is counteracted by the viral protein E1B-55K. Inactivation of the ability of RB1 to arrest the cell cycle is critical for cellular transformation, uncontrolled cellular growth and proliferation induced by viral infection. Interaction with RBX1 and CUL1 inhibits ubiquitination of the proteins targeted by SCF(FBXW7) ubiquitin ligase complex, and may be linked to unregulated host cell proliferation. The tumorigenesis-restraining activity of E1A may be related to the disruption of the host CtBP-CtIP complex through the CtBP binding motif. The chain is Early E1A protein from Canine adenovirus serotype 1 (strain RI261) (CAdV-1).